The following is a 607-amino-acid chain: Elongation factor 4 (607 aa).

The 183-residue stretch at 11–193 folds into the tr-type G domain; the sequence is SKIRNFSIIA…QIVEKVPAPT (183 aa). GTP is bound by residues 23–28 and 140–143; these read DHGKST and NKID.

The protein belongs to the TRAFAC class translation factor GTPase superfamily. Classic translation factor GTPase family. LepA subfamily.

Its subcellular location is the cell membrane. The catalysed reaction is GTP + H2O = GDP + phosphate + H(+). In terms of biological role, required for accurate and efficient protein synthesis under certain stress conditions. May act as a fidelity factor of the translation reaction, by catalyzing a one-codon backward translocation of tRNAs on improperly translocated ribosomes. Back-translocation proceeds from a post-translocation (POST) complex to a pre-translocation (PRE) complex, thus giving elongation factor G a second chance to translocate the tRNAs correctly. Binds to ribosomes in a GTP-dependent manner. The polypeptide is Elongation factor 4 (Bacillus anthracis (strain CDC 684 / NRRL 3495)).